Reading from the N-terminus, the 135-residue chain is DGLKLNYLRISEAKLTGIPKDLPETLNELHLDHNKIQAIELEDLLRYSKLYRLGLGHNQIRMIENGSLSFLPTLRELHLDNNKLSRVPAGLPDLKLLQVVYLHSNNITKVGVNDFCPVGFGVKRAYYNGISLFNN.

LRR repeat units follow at residues 4 to 24 (KLNY…DLPE), 25 to 46 (TLNE…DLLR), 49 to 72 (KLYR…SFLP), 73 to 95 (TLRE…PDLK), and 96 to 117 (LLQV…DFCP). N-linked (GlcNAc...) asparagine glycosylation is present at Asn65. A glycan (N-linked (GlcNAc...) asparagine) is linked at Asn106.

The protein belongs to the small leucine-rich proteoglycan (SLRP) family. SLRP class I subfamily. As to quaternary structure, homodimer. Forms a ternary complex with MFAP2 and ELN. In terms of processing, the two attached glycosaminoglycan chains can be either chondroitin sulfate or dermatan sulfate. As to expression, found in several connective tissues, especially in articular cartilages.

It localises to the secreted. Its subcellular location is the extracellular space. The protein resides in the extracellular matrix. May be involved in collagen fiber assembly. The sequence is that of Biglycan (BGN) from Oryctolagus cuniculus (Rabbit).